The following is a 137-amino-acid chain: L-ectoine synthase (137 aa).

The tract at residues 115–137 (EVHDESGAYPADPELAREPVAAD) is disordered.

The protein belongs to the ectoine synthase family.

The enzyme catalyses (2S)-4-acetamido-2-aminobutanoate = L-ectoine + H2O. The protein operates within amine and polyamine biosynthesis; ectoine biosynthesis; L-ectoine from L-aspartate 4-semialdehyde: step 3/3. Its function is as follows. Catalyzes the circularization of gamma-N-acetyl-alpha,gamma-diaminobutyric acid (ADABA) to ectoine (1,4,5,6-tetrahydro-2-methyl-4-pyrimidine carboxylic acid), which is an excellent osmoprotectant. The chain is L-ectoine synthase from Sphingopyxis alaskensis (strain DSM 13593 / LMG 18877 / RB2256) (Sphingomonas alaskensis).